Reading from the N-terminus, the 270-residue chain is 4-hydroxy-tetrahydrodipicolinate reductase (270 aa).

NAD(+)-binding positions include 11 to 16 (GAGGRM) and Glu-37. Residue Arg-38 coordinates NADP(+). NAD(+) is bound by residues 101-103 (GTT) and 125-128 (APNM). The active-site Proton donor/acceptor is His-158. A (S)-2,3,4,5-tetrahydrodipicolinate-binding site is contributed by His-159. Residue Lys-162 is the Proton donor of the active site. 168 to 169 (GT) contacts (S)-2,3,4,5-tetrahydrodipicolinate.

Belongs to the DapB family.

It is found in the cytoplasm. The catalysed reaction is (S)-2,3,4,5-tetrahydrodipicolinate + NAD(+) + H2O = (2S,4S)-4-hydroxy-2,3,4,5-tetrahydrodipicolinate + NADH + H(+). The enzyme catalyses (S)-2,3,4,5-tetrahydrodipicolinate + NADP(+) + H2O = (2S,4S)-4-hydroxy-2,3,4,5-tetrahydrodipicolinate + NADPH + H(+). The protein operates within amino-acid biosynthesis; L-lysine biosynthesis via DAP pathway; (S)-tetrahydrodipicolinate from L-aspartate: step 4/4. Catalyzes the conversion of 4-hydroxy-tetrahydrodipicolinate (HTPA) to tetrahydrodipicolinate. The protein is 4-hydroxy-tetrahydrodipicolinate reductase of Shewanella sp. (strain W3-18-1).